Here is a 335-residue protein sequence, read N- to C-terminus: UPF0353 protein MUL_1490 (335 aa).

2 helical membrane-spanning segments follow: residues 18-38 (WFFL…VLQL) and 67-87 (IPAM…AGPT). In terms of domain architecture, VWFA spans 98–298 (VVMLVIDVSQ…SVYVSLQQQI (201 aa)). A helical transmembrane segment spans residues 309-329 (MGWLRLGALVLVAAALAALLI).

This sequence belongs to the UPF0353 family.

It is found in the cell membrane. In Mycobacterium ulcerans (strain Agy99), this protein is UPF0353 protein MUL_1490.